The sequence spans 443 residues: Regulator of rDNA transcription protein 5 (443 aa).

The RRM 1 domain occupies 4 to 87 (SRIYIANVSY…RVLRVRTHNP (84 aa)). A disordered region spans residues 112-140 (EDTAASGERAPTDAQDHPDQPQEGHMSPD). A compositionally biased stretch (basic and acidic residues) spans 121-133 (APTDAQDHPDQPQ). The region spanning 183–268 (DTVYCAFLPK…TKISIKPAYI (86 aa)) is the RRM 2 domain. Residues 408 to 443 (GMTKQSVGSNKKKNKKKKSARGKEVRKLSVSNTTTQ) form a disordered region. Residues 417–427 (NKKKNKKKKSA) are compositionally biased toward basic residues.

It belongs to the RRT5 family.

Functionally, may be involved in the modulation of rDNA transcription. The polypeptide is Regulator of rDNA transcription protein 5 (RRT5) (Candida glabrata (strain ATCC 2001 / BCRC 20586 / JCM 3761 / NBRC 0622 / NRRL Y-65 / CBS 138) (Yeast)).